We begin with the raw amino-acid sequence, 293 residues long: Meteorin (293 aa).

Residues Met1–Ala23 form the signal peptide. 5 cysteine pairs are disulfide-bonded: Cys30-Cys51, Cys82-Cys118, Cys171-Cys242, Cys174-Cys266, and Cys184-Cys288.

Belongs to the meteorin family. In terms of assembly, monomer.

It is found in the secreted. In terms of biological role, involved in both glial cell differentiation and axonal network formation during neurogenesis. Promotes astrocyte differentiation and transforms cerebellar astrocytes into radial glia. Also induces axonal extension in small and intermediate neurons of sensory ganglia by activating nearby satellite glia. The sequence is that of Meteorin (METRN) from Homo sapiens (Human).